The primary structure comprises 443 residues: Aklavinone 7-beta-L-rhodosaminyltransferase (443 aa).

The first 23 residues, 1-23 (MRVLLTSFALDAHFNGSVPLAWA), serve as a signal peptide directing secretion.

Belongs to the glycosyltransferase 28 family.

The enzyme catalyses dTDP-beta-L-rhodosamine + aklavinone = aclacinomycin T + dTDP + 2 H(+). With respect to regulation, the activity of AknS is substantially increased by the addition of the accessory protein AknT. Functionally, involved in the biosynthesis of the anthracycline antitumor agent aclacinomycin A. Catalyzes the transfer of the proximal deoxyhexose, L-rhodosamine, from dTDP-beta-L-rhodosamine to the C7-OH of aklavinone aglycone to yield aclacinomycin T (rhodosaminyl-aklavinone). It can also use dTDP-2-deoxy-beta-L-fucose, TDP-2-deoxyfucose, dTDP-4-amino-2-deoxyrhamnose, TDP-L-rhodosamine as sugar donor and epsilon-rhodomycinone as sugar acceptor. In Streptomyces galilaeus, this protein is Aklavinone 7-beta-L-rhodosaminyltransferase.